Reading from the N-terminus, the 207-residue chain is MTGFSVSLFVSNLSNVASYLSPIFENIPSTKVVPAQIEKVVSLVSRTGRDLQRYDHAGYRQVVGCVPYRYKKQEVNGVETQVIQVLLVSAQKGKGMLFPKGGWETDESMEEAALRETIEEAGVTGELEEKLGKWQYKSKRHSIIHDGYMFALLVSQEFERWPEAEMRQRRWVSLDEAREVCQNWWMREALEAFINLKCLADDDESGN.

Residues glycine 58 to isoleucine 194 enclose the Nudix hydrolase domain. A Nudix box motif is present at residues glycine 101–glycine 122. Mg(2+)-binding residues include glutamate 116 and glutamate 120.

It belongs to the Nudix hydrolase family. The cofactor is Mg(2+). It depends on Mn(2+) as a cofactor. Expressed in roots, stems and leaves.

The enzyme catalyses ADP-D-ribose + H2O = D-ribose 5-phosphate + AMP + 2 H(+). It catalyses the reaction NAD(+) + H2O = beta-nicotinamide D-ribonucleotide + AMP + 2 H(+). It carries out the reaction NADH + H2O = reduced beta-nicotinamide D-ribonucleotide + AMP + 2 H(+). Probably mediates the hydrolysis of some nucleoside diphosphate derivatives. In vitro, it can use both NADH and ADP-ribose as substrates; however the relevance of such substrates in vivo is unclear. The polypeptide is Nudix hydrolase 4 (NUDT4) (Arabidopsis thaliana (Mouse-ear cress)).